Reading from the N-terminus, the 82-residue chain is MVTIRLARGGAKKRPFYQVVVTDSRNARDGRFIERVGFFNPIASGQAEALRLDLDRIEHWIGLGATVSDRVSVLIKDAKKAA.

It belongs to the bacterial ribosomal protein bS16 family.

This chain is Small ribosomal subunit protein bS16, found in Yersinia pseudotuberculosis serotype O:1b (strain IP 31758).